Here is a 495-residue protein sequence, read N- to C-terminus: MEPVQKLQIPYKSIRLSDGTEYQSYHTEGALSGKQPADYKNGIPAFRKEWIQKRFNHSNHSQMYFAKKGIITEEMRYAAFRENMEPEFVRSEIACGRAILPSNRNHPELEPMIIGKNFLVKINANIGNSTFSSSIEEEVEKLHWAIKWGADTVMDLSTGKNIHETREWILRNSPVPIGTVPIYQALEKVKGKTENLNIQIFLETLEEQAEQGVDYFTIHAGVLLRYIPLTTNRITGIVSRGGSILAKWCQAHHKENFLYTHFDEILKVMKKYGVSISLGDGLRPGSIADANDKAQFSELETLGELTQLAWKEDIQVMIEGPGHVPMNLIKENVDLQTKICQEAPFYTLGPIVTDIAPGYDHITSAIGAAMIGWYGTAMLCYVTPKEHLGLPNKEDVKQGVIAYKIAAHAADLAKGHPGAIDRDNLLSKARFEFRWEDQFSLSLDPETAKTFHDEMLPQDRMKTAHFCSMCGPHFCSMNLTQELRKFAQEKEIQES.

Residues asparagine 125, methionine 154, tyrosine 183, histidine 219, 239–241 (SRG), 280–283 (DGLR), and glutamate 319 each bind substrate. Residue histidine 323 coordinates Zn(2+). Position 346 (tyrosine 346) interacts with substrate. Histidine 387 is a binding site for Zn(2+). [4Fe-4S] cluster-binding residues include cysteine 467, cysteine 470, and cysteine 475.

Belongs to the ThiC family. [4Fe-4S] cluster is required as a cofactor.

The catalysed reaction is 5-amino-1-(5-phospho-beta-D-ribosyl)imidazole + S-adenosyl-L-methionine = 4-amino-2-methyl-5-(phosphooxymethyl)pyrimidine + CO + 5'-deoxyadenosine + formate + L-methionine + 3 H(+). Its pathway is cofactor biosynthesis; thiamine diphosphate biosynthesis. Functionally, catalyzes the synthesis of the hydroxymethylpyrimidine phosphate (HMP-P) moiety of thiamine from aminoimidazole ribotide (AIR) in a radical S-adenosyl-L-methionine (SAM)-dependent reaction. The sequence is that of Phosphomethylpyrimidine synthase from Leptospira interrogans serogroup Icterohaemorrhagiae serovar Lai (strain 56601).